The following is a 172-amino-acid chain: RNA pyrophosphohydrolase (172 aa).

In terms of domain architecture, Nudix hydrolase spans 8-153 (QHRPNVGVVL…KRGVYEAVVA (146 aa)). The short motif at 43–64 (GGVDEGEDLEVAARRELAEETG) is the Nudix box element.

Belongs to the Nudix hydrolase family. RppH subfamily. Requires a divalent metal cation as cofactor.

Functionally, accelerates the degradation of transcripts by removing pyrophosphate from the 5'-end of triphosphorylated RNA, leading to a more labile monophosphorylated state that can stimulate subsequent ribonuclease cleavage. The sequence is that of RNA pyrophosphohydrolase from Caulobacter vibrioides (strain ATCC 19089 / CIP 103742 / CB 15) (Caulobacter crescentus).